A 207-amino-acid chain; its full sequence is MSGRKKSLLKVIILGDSSVGKTSLMNQYVNKRFSNQYKATIGADFCTKEVVVNDRVVTMQIWDTAGQERFQSLGVAFYRGADCCVLVYDVTAPNSFKNLDSWRDEFLIQASPRDPDHFPFVVLGNKVDLDNRQVSTRRAQQWCQSKNDIPYYETSAKEGINVEMAFQVIAKNALELEAEAEVINDFPDQITLGSQNNRPGNPDNCQC.

GTP contacts are provided by residues 15 to 22, 34 to 40, 63 to 67, 125 to 128, and 156 to 157; these read GDSSVGKT, SNQYKAT, DTAGQ, NKVD, and AK. Positions 37-45 match the Effector region motif; that stretch reads YKATIGADF. S-geranylgeranyl cysteine attachment occurs at residues cysteine 205 and cysteine 207.

This sequence belongs to the small GTPase superfamily. Rab family. As to expression, expressed in eye (at protein level).

The protein resides in the early endosome membrane. Its subcellular location is the late endosome membrane. It is found in the lysosome membrane. The protein localises to the cytoplasmic vesicle. It localises to the autophagosome membrane. The protein resides in the autolysosome membrane. Its subcellular location is the presynapse. It is found in the perikaryon. The catalysed reaction is GTP + H2O = GDP + phosphate + H(+). Small GTPase which cycles between active GTP-bound and inactive GDP-bound states. In its active state, binds to a variety of effector proteins playing a key role in the regulation of endo-lysosomal trafficking. Involved in microtubule minus and plus end-directed endosomal migration and positioning, and endosome-lysosome transport through different protein-protein interaction cascades. Governs early-to-late endosomal to lysosomal maturation. Controls endocytic cargo sorting towards the late endosome facilitating its eventual endolysosomal-mediated degradation. Together with Rab2 involved in promoting fusion of autophagosomes and endosomes with lysosomes probably through recruitment of the HOPS tethering complex. Involved in biosynthetic transport to lysosomes. Involved in establishing morphogen concentration gradients, for example of the TGF-beta homolog dpp/decapentaplegic, during pattern formation and organogenesis. Together with the Mon1-Ccz1 complex, required for autolysosome formation in fat cells and autophagic degradation during starvation-induced basal and developmental autophagy. Together with Mon1, regulates levels of postsynaptic glutamate receptor GluRIIA in the neuromuscular junction (NMJ) presynapse. Required for autophagocytosis-dependent remodeling of myofibrils and transverse-tubules (T-tubules) during metamorphosis. Involved in intracellular trafficking of the carbohydrate transporter Tret1 in glial cells of the blood brain barrier, influencing its subcellular localization and protein levels. This Drosophila melanogaster (Fruit fly) protein is Ras-related protein Rab7.